The primary structure comprises 521 residues: Bifunctional purine biosynthesis protein PurH (521 aa).

Residues 1–145 form the MGS-like domain; the sequence is MIKQALISVS…KNHRDVTVVV (145 aa).

The protein belongs to the PurH family.

The catalysed reaction is (6R)-10-formyltetrahydrofolate + 5-amino-1-(5-phospho-beta-D-ribosyl)imidazole-4-carboxamide = 5-formamido-1-(5-phospho-D-ribosyl)imidazole-4-carboxamide + (6S)-5,6,7,8-tetrahydrofolate. It catalyses the reaction IMP + H2O = 5-formamido-1-(5-phospho-D-ribosyl)imidazole-4-carboxamide. It functions in the pathway purine metabolism; IMP biosynthesis via de novo pathway; 5-formamido-1-(5-phospho-D-ribosyl)imidazole-4-carboxamide from 5-amino-1-(5-phospho-D-ribosyl)imidazole-4-carboxamide (10-formyl THF route): step 1/1. It participates in purine metabolism; IMP biosynthesis via de novo pathway; IMP from 5-formamido-1-(5-phospho-D-ribosyl)imidazole-4-carboxamide: step 1/1. This Paraburkholderia phytofirmans (strain DSM 17436 / LMG 22146 / PsJN) (Burkholderia phytofirmans) protein is Bifunctional purine biosynthesis protein PurH.